We begin with the raw amino-acid sequence, 627 residues long: Nuclear receptor subfamily 4 group A member 3 (627 aa).

Residues 1–112 are activation function (AF)-1 domain; that stretch reads MPCVQAQYSP…HHHHHHHHHQ (112 aa). Residues 1–139 form a required for DNA-PK heterotrimer region; the sequence is MPCVQAQYSP…PSTSMYFKQS (139 aa). An interaction with NCOA1, NCOA2, NCOA3 and KAT2B region spans residues 1–292; it reads MPCVQAQYSP…NRSSSSGEGT (292 aa). Disordered regions lie at residues 96–162 and 268–289; these read HGYH…DELP and ASSLLGESPSLPSPPNRSSSSG. The span at 97–112 shows a compositional bias: basic residues; sequence GYHHHHHHHHHHHHHQ. The span at 141–150 shows a compositional bias: pro residues; the sequence is PSTPTTPGFP. Residues 269–288 show a composition bias toward low complexity; sequence SSLLGESPSLPSPPNRSSSS. The segment at residues 290–365 is a DNA-binding region (nuclear receptor); it reads EGTCAVCGDN…VGMVKEVVRT (76 aa). NR C4-type zinc fingers lie at residues 293–313 and 329–353; these read CAVCGDNAACQHYGVRTCEGC and CLANKNCPVDKRRRNRCQYCRFQKC. The interval 365–395 is disordered; that stretch reads TDSLKGRRGRLPSKPKSPLQQEPSQPSPPSP. A compositionally biased stretch (low complexity) spans 378 to 388; it reads KPKSPLQQEPS. The segment at 380-627 is interaction with KAT2B; sequence KSPLQQEPSQ…DKLFLDTLPF (248 aa). One can recognise an NR LBD domain in the interval 395–624; it reads PPICMMNALV…SVIDKLFLDT (230 aa).

Belongs to the nuclear hormone receptor family. NR4 subfamily. In terms of assembly, interacts with SIX3 (via homeobox); differentially regulates the transcriptional activities of NR4A3. Interacts with NCOA2; potentiates the activity of the NR4A3. Interacts with NCOA1, NCOA3, MED1 and KAT2B. Interacts with EP300 and NCOA2; mediates the recruitment of MED1 in the coactivator complex. Interacts with the constituents of DNA-PK heterotrimer PRKDC, XRCC6 and XRCC5; phosphorylates and prevents NR4A3 ubiquitinylation and degradation. Interacts with NR3C1 (via nuclear receptor DNA-binding domain); the interactions represses transcription activity of NR4A3 on the POMC promoter Nur response element (NurRE). Interacts with TRIM28; the interactions potentiates NR4A3 activity on NurRE promoter. Binds DNA as a monomer and homodimer. Interacts with PARP1; activates PARP1 by improving acetylation of PARP1 and suppressing the interaction between PARP1 and SIRT1. In terms of processing, phosphorylated by PRKDC. As to expression, ubiquitous. Highest levels of expression in brain. Widely expressed throughout the arcuate nucleus region of the hypothalamus, namely in AgRP neurons.

The protein resides in the nucleus. In terms of biological role, transcriptional activator that binds to regulatory elements in promoter regions in a cell- and response element (target)-specific manner. Induces gene expression by binding as monomers to the NR4A1 response element (NBRE) 5'-AAAAGGTCA-3' site and as homodimers to the Nur response element (NurRE) site in the promoter of their regulated target genes. Plays a role in the regulation of proliferation, survival and differentiation of many different cell types and also in metabolism and inflammation. Mediates proliferation of vascular smooth muscle, myeloid progenitor cell and type B pancreatic cells; promotes mitogen-induced vascular smooth muscle cell proliferation through transactivation of SKP2 promoter by binding a NBRE site. Upon PDGF stimulation, stimulates vascular smooth muscle cell proliferation by regulating CCND1 and CCND2 expression. In islets, induces type B pancreatic cell proliferation through up-regulation of genes that activate cell cycle, as well as genes that cause degradation of the CDKN1A. Negatively regulates myeloid progenitor cell proliferation by repressing RUNX1 in a NBRE site-independent manner. During inner ear, plays a role as a key mediator of the proliferative growth phase of semicircular canal development. Also mediates survival of neuron and smooth muscle cells; mediates CREB-induced neuronal survival, and during hippocampus development, plays a critical role in pyramidal cell survival and axonal guidance. Is required for S phase entry of the cell cycle and survival of smooth muscle cells by inducing CCND1, resulting in RB1 phosphorylation. Binds to NBRE motif in CCND1 promoter, resulting in the activation of the promoter and CCND1 transcription. Also plays a role in inflammation; upon TNF stimulation, mediates monocyte adhesion by inducing the expression of VCAM1 and ICAM1 by binding to the NBRE consensus site. In mast cells activated by Fc-epsilon receptor cross-linking, promotes the synthesis and release of cytokines but impairs events leading to degranulation. Also plays a role in metabolism; by modulating feeding behavior; and by playing a role in energy balance by inhibiting the glucocorticoid-induced orexigenic neuropeptides AGRP expression, at least in part by forming a complex with activated NR3C1 on the AGRP- glucocorticoid response element (GRE), and thus weakening the DNA binding activity of NR3C1. Upon catecholamines stimulation, regulates gene expression that controls oxidative metabolism in skeletal muscle. Plays a role in glucose transport by regulating translocation of the SLC2A4 glucose transporter to the cell surface. Finally, during gastrulation plays a crucial role in the formation of anterior mesoderm by controlling cell migration. Inhibits adipogenesis. Also participates in cardiac hypertrophy by activating PARP1. The protein is Nuclear receptor subfamily 4 group A member 3 (Nr4a3) of Mus musculus (Mouse).